Reading from the N-terminus, the 351-residue chain is L-threonine 3-dehydrogenase (351 aa).

Cysteine 39 provides a ligand contact to Zn(2+). Residues threonine 41 and histidine 44 each act as charge relay system in the active site. Residues histidine 64, glutamate 65, cysteine 94, cysteine 97, cysteine 100, and cysteine 108 each coordinate Zn(2+). NAD(+) is bound by residues isoleucine 176, aspartate 196, arginine 201, 271–273 (LGI), and 295–296 (IY).

This sequence belongs to the zinc-containing alcohol dehydrogenase family. As to quaternary structure, homotetramer. Zn(2+) is required as a cofactor.

The protein resides in the cytoplasm. The catalysed reaction is L-threonine + NAD(+) = (2S)-2-amino-3-oxobutanoate + NADH + H(+). It participates in amino-acid degradation; L-threonine degradation via oxydo-reductase pathway; glycine from L-threonine: step 1/2. Its function is as follows. Catalyzes the NAD(+)-dependent oxidation of L-threonine to 2-amino-3-ketobutyrate. The chain is L-threonine 3-dehydrogenase from Francisella tularensis subsp. novicida (strain U112).